The following is a 481-amino-acid chain: ATP synthase subunit beta (481 aa).

Residue 160 to 167 participates in ATP binding; sequence GGAGVGKT.

The protein belongs to the ATPase alpha/beta chains family. As to quaternary structure, F-type ATPases have 2 components, CF(1) - the catalytic core - and CF(0) - the membrane proton channel. CF(1) has five subunits: alpha(3), beta(3), gamma(1), delta(1), epsilon(1). CF(0) has three main subunits: a(1), b(2) and c(9-12). The alpha and beta chains form an alternating ring which encloses part of the gamma chain. CF(1) is attached to CF(0) by a central stalk formed by the gamma and epsilon chains, while a peripheral stalk is formed by the delta and b chains.

It is found in the cell inner membrane. It catalyses the reaction ATP + H2O + 4 H(+)(in) = ADP + phosphate + 5 H(+)(out). Its function is as follows. Produces ATP from ADP in the presence of a proton gradient across the membrane. The catalytic sites are hosted primarily by the beta subunits. This is ATP synthase subunit beta from Stigmatella aurantiaca.